Reading from the N-terminus, the 242-residue chain is Segregation and condensation protein A (242 aa).

The protein belongs to the ScpA family. Component of a cohesin-like complex composed of ScpA, ScpB and the Smc homodimer, in which ScpA and ScpB bind to the head domain of Smc. The presence of the three proteins is required for the association of the complex with DNA.

It is found in the cytoplasm. Functionally, participates in chromosomal partition during cell division. May act via the formation of a condensin-like complex containing Smc and ScpB that pull DNA away from mid-cell into both cell halves. This chain is Segregation and condensation protein A, found in Streptococcus mitis.